Consider the following 181-residue polypeptide: Ferredoxin C 2, chloroplastic (181 aa).

Residues 1-44 constitute a chloroplast transit peptide; sequence MALILPCTFCTSLQKKNFPINRRYITNFRRGATTATCEFRIPVE. The region spanning 59–151 is the 2Fe-2S ferredoxin-type domain; that stretch reads HKVTVHDRQR…DLEVETQDED (93 aa). Residues cysteine 97, cysteine 102, cysteine 105, and cysteine 135 each contribute to the [2Fe-2S] cluster site.

This sequence belongs to the 2Fe2S plant-type ferredoxin family. [2Fe-2S] cluster is required as a cofactor.

It is found in the plastid. It localises to the chloroplast. Functionally, ferredoxins are iron-sulfur proteins that transfer electrons in a wide variety of metabolic reactions. Mediates alternative electron partitioning in conditions of acceptor limitation at photosystem I. In Arabidopsis thaliana (Mouse-ear cress), this protein is Ferredoxin C 2, chloroplastic.